Here is a 519-residue protein sequence, read N- to C-terminus: MMRSLHSLRRMSGTVLALMLAAGLPLSAAQAQPAKPAPKGDQKPATPAPSEQFVDGIAAIVNKDVITLREVREASKLASADLQKRGIQVPDERTLQKQVLQRLIMERLERQEADRMGIRVDEAQVDQAINMIASRNKITPAAMRAEIEKSGVTWEQYRKSLRDDIRMDRLRQRAVDANIIISDAEVDAFLKDQERNPAAAQATRAPAPQQPQPQPRQPAQSGPAMLVLAQILVRVPEGSSPDQVAALRKKAEGLLARAKKGDDFASLAAANSDGPEALQGGMMGARPLDGWPDLFVKAAGSLSAGQVSGLVQSGNGFHILKVVDRAGGGQPAQAARPAPAPAPQQPSSFQEGPSVAAPQGPVRVTQTHARHILIKTSTVMTDDQARQRLEQIRERLQGGAVKFEDMARQYSQDSTAPQGGDLGWVNPGDTVPPFEAAMNALQPNEISPPVLSPFGWHLIQVLERREHDVSDEVQRMRARQLLFERRAVPAFEDWLEQLRSQAFIDNRLEKQERLEQNNR.

An N-terminal signal peptide occupies residues 1–31 (MMRSLHSLRRMSGTVLALMLAAGLPLSAAQA). Low complexity-rich tracts occupy residues 31-45 (AQPA…QKPA) and 197-207 (PAAAQATRAPA). 2 disordered regions span residues 31-50 (AQPA…PAPS) and 196-221 (NPAA…PAQS). The PpiC 1 domain maps to 223–324 (PAMLVLAQIL…NGFHILKVVD (102 aa)). A disordered region spans residues 328-361 (GGQPAQAARPAPAPAPQQPSSFQEGPSVAAPQGP). The 100-residue stretch at 364–463 (VTQTHARHIL…FGWHLIQVLE (100 aa)) folds into the PpiC 2 domain.

Its subcellular location is the periplasm. It catalyses the reaction [protein]-peptidylproline (omega=180) = [protein]-peptidylproline (omega=0). Its function is as follows. Chaperone involved in the correct folding and assembly of outer membrane proteins. Recognizes specific patterns of aromatic residues and the orientation of their side chains, which are found more frequently in integral outer membrane proteins. May act in both early periplasmic and late outer membrane-associated steps of protein maturation. This is Chaperone SurA from Bordetella bronchiseptica (strain ATCC BAA-588 / NCTC 13252 / RB50) (Alcaligenes bronchisepticus).